Reading from the N-terminus, the 319-residue chain is Formimidoylglutamase (319 aa).

The Mn(2+) site is built by His131, Asp154, His156, Asp158, Cys248, and Asp250.

The protein belongs to the arginase family. Requires Mn(2+) as cofactor.

The enzyme catalyses N-formimidoyl-L-glutamate + H2O = formamide + L-glutamate. The protein operates within amino-acid degradation; L-histidine degradation into L-glutamate; L-glutamate from N-formimidoyl-L-glutamate (hydrolase route): step 1/1. Functionally, catalyzes the conversion of N-formimidoyl-L-glutamate to L-glutamate and formamide. This Legionella pneumophila (strain Lens) protein is Formimidoylglutamase.